A 995-amino-acid chain; its full sequence is Pheromone-regulated membrane protein 10 (995 aa).

4 disordered regions span residues 1-217 (MSSH…GEKH), 253-299 (GRVL…AVEM), 326-407 (DQSF…YIAP), and 425-508 (NPQD…NPDQ). A compositionally biased stretch (low complexity) spans 74–88 (SNSSTTNNSTESSGS). The span at 110 to 121 (VKGESGDAHEGS) shows a compositional bias: basic and acidic residues. A compositionally biased stretch (low complexity) spans 157 to 166 (SRGSVGSSSS). The segment covering 170–187 (KGSDDVNEKETNLDHDYD) has biased composition (basic and acidic residues). The segment covering 259 to 269 (GSGGGGGGGLI) has biased composition (gly residues). Residues 283-296 (EEKEVGGGGEDDGA) show a composition bias toward acidic residues. The span at 326 to 347 (DQSFTYDEPNQSAGSSRNSTAP) shows a compositional bias: polar residues. 2 stretches are compositionally biased toward basic and acidic residues: residues 359-371 (DDHK…DQGK) and 385-396 (GNDDPEDQHLLL). Residues 495–506 (EADDEDEDEENP) are compositionally biased toward acidic residues. The next 10 membrane-spanning stretches (helical) occupy residues 678–698 (VFLY…GGWL), 700–720 (IPVT…VSSM), 726–746 (SVFE…IGSI), 752–772 (FCFS…YIIL), 794–814 (IIYS…FGWV), 833–850 (KYRI…GLIN), 858–878 (PVMM…GKHF), 881–901 (VPEF…NVYS), 906–926 (GMAV…GIAS), and 965–985 (VEVS…VYPF).

Belongs to the ThrE exporter (TC 2.A.79) family.

The protein resides in the membrane. This is Pheromone-regulated membrane protein 10 from Pichia sorbitophila (strain ATCC MYA-4447 / BCRC 22081 / CBS 7064 / NBRC 10061 / NRRL Y-12695) (Hybrid yeast).